Consider the following 650-residue polypeptide: DNA gyrase subunit B (650 aa).

Residues 400-414 (RRSQEARELTRRKSP) are compositionally biased toward basic and acidic residues. The disordered stretch occupies residues 400–422 (RRSQEARELTRRKSPFDSGSLPG). The 115-residue stretch at 435–549 (SELYIVEGDS…QGNIFIAQPP (115 aa)) folds into the Toprim domain. Residues E441, D514, and D516 each coordinate Mg(2+).

This sequence belongs to the type II topoisomerase GyrB family. Heterotetramer, composed of two GyrA and two GyrB chains. In the heterotetramer, GyrA contains the active site tyrosine that forms a transient covalent intermediate with DNA, while GyrB binds cofactors and catalyzes ATP hydrolysis. Requires Mg(2+) as cofactor. Mn(2+) is required as a cofactor. It depends on Ca(2+) as a cofactor.

The protein localises to the cytoplasm. The catalysed reaction is ATP-dependent breakage, passage and rejoining of double-stranded DNA.. Functionally, a type II topoisomerase that negatively supercoils closed circular double-stranded (ds) DNA in an ATP-dependent manner to modulate DNA topology and maintain chromosomes in an underwound state. Negative supercoiling favors strand separation, and DNA replication, transcription, recombination and repair, all of which involve strand separation. Also able to catalyze the interconversion of other topological isomers of dsDNA rings, including catenanes and knotted rings. Type II topoisomerases break and join 2 DNA strands simultaneously in an ATP-dependent manner. The chain is DNA gyrase subunit B from Mycoplasma genitalium (strain ATCC 33530 / DSM 19775 / NCTC 10195 / G37) (Mycoplasmoides genitalium).